The chain runs to 105 residues: Co-chaperonin GroES (105 aa).

Belongs to the GroES chaperonin family. In terms of assembly, heptamer of 7 subunits arranged in a ring. Interacts with the chaperonin GroEL.

The protein localises to the cytoplasm. Its function is as follows. Together with the chaperonin GroEL, plays an essential role in assisting protein folding. The GroEL-GroES system forms a nano-cage that allows encapsulation of the non-native substrate proteins and provides a physical environment optimized to promote and accelerate protein folding. GroES binds to the apical surface of the GroEL ring, thereby capping the opening of the GroEL channel. In Parvibaculum lavamentivorans (strain DS-1 / DSM 13023 / NCIMB 13966), this protein is Co-chaperonin GroES.